Here is a 280-residue protein sequence, read N- to C-terminus: MAVTAALVKELRERTGAGMMECKKALVETNGDVELAIENMRKSGAAKAAKKAGNVAAEGAIFIKEENGVAVLLEVNCQTDFVAKDGNFTAFAGKVAAEALASKASIEELQAKFEEERVALVAKIGENINIRRVQFVEGTALASYRHGEKIGVVVAGEGDAETLKHIAMHVAASRPEYVNPEDVPADVVAKEREVQVEIAMNEGKPKEIAEKMVEGRMKKFTGEVSLTGQPFVMEPKKSVAEILKERGASVVTFVRLEVGEGIEKAEGLSFAEEVALAQKG.

The interval 79–82 (TDFV) is involved in Mg(2+) ion dislocation from EF-Tu.

This sequence belongs to the EF-Ts family.

The protein localises to the cytoplasm. Associates with the EF-Tu.GDP complex and induces the exchange of GDP to GTP. It remains bound to the aminoacyl-tRNA.EF-Tu.GTP complex up to the GTP hydrolysis stage on the ribosome. The protein is Elongation factor Ts of Vibrio vulnificus (strain CMCP6).